The chain runs to 169 residues: Protein yop1 (169 aa).

Topologically, residues 1–35 (MASFQDRAQHTIAQLDKELSKYPVLNNLERQTSVP) are cytoplasmic. The helical transmembrane segment at 36 to 55 (KVYVILGLVGIYTFLVFFNI) threads the bilayer. A topological domain (lumenal) is located at residue alanine 56. The helical transmembrane segment at 57 to 76 (GEFLVNFAGFLIPGYYSLNA) threads the bilayer. At 77-86 (LFTSGKADDT) the chain is on the cytoplasmic side. A helical membrane pass occupies residues 87 to 103 (QWLTYWVVYALLTVVES). The Lumenal portion of the chain corresponds to 104 to 105 (AI). A helical membrane pass occupies residues 106–124 (NAAYWFPFYYIFKFVLILW). The Cytoplasmic portion of the chain corresponds to 125–169 (MSLPQTNGAQVVFHSFLQPVLGRFFTSGSTSANLRAQADAASKSQ).

The protein belongs to the DP1 family. As to quaternary structure, oligomer.

The protein resides in the endoplasmic reticulum membrane. It is found in the golgi apparatus membrane. Functionally, required to generate and maintain the structure of the tubular endoplasmic reticulum network and the vacuole. Induces high curvature in membranes and causes membrane tubule formation. Involved in membrane/vesicle trafficking. The protein is Protein yop1 (yop1) of Aspergillus fumigatus (strain ATCC MYA-4609 / CBS 101355 / FGSC A1100 / Af293) (Neosartorya fumigata).